A 70-amino-acid chain; its full sequence is Frenatin 4.1 (70 aa).

The first 22 residues, 1 to 22, serve as a signal peptide directing secretion; that stretch reads MAFLKKSLFLVLFLGLVNLSIC. Positions 23–46 are excised as a propeptide; sequence EEEKREEENKEEEDENEALSEVKR. The residue at position 68 (lysine 68) is a Lysine amide.

It belongs to the frog skin active peptide (FSAP) family. Frenatin subfamily. In terms of tissue distribution, expressed by the skin glands.

It localises to the secreted. Its subcellular location is the target cell membrane. In terms of biological role, peptide with unknown function. Does not show antimicrobial activity against S.aureus (MIC&gt;512 ug/mL), E.coli (MIC&gt;512 ug/mL) and C.albicans (MIC&gt;512 ug/mL). Does not show hemolytic activity. Its function is as follows. Antimicrobial peptide with activity against E.coli (MIC=128 ug/mL or 54 uM) and C.albicans (MIC=256 ug/mL or 108 uM). Does not show activity against S.aureus (MIC&gt;512 ug/mL). Does not show hemolytic activity. In Nyctimystes infrafrenatus (White-lipped tree frog), this protein is Frenatin 4.1.